Reading from the N-terminus, the 400-residue chain is uncharacterized protein (400 aa).

The protein to M.jannaschii MJ1544 and MJ1637.

This is an uncharacterized protein from Haemophilus influenzae (strain ATCC 51907 / DSM 11121 / KW20 / Rd).